The primary structure comprises 211 residues: MANSNTNQLHPLGATTSQTFITALNHTAASTIAINFRELIKEPKELDEASNYLYQALLDDVVAGIFIETHHLRKTGNLAALDGVGEENLESAFHICEMPNLDIFGISTAKKQMDCTCPNCDRLVAAARFAPHLEKCMGMGRISSRIASRRLATKEGSSASTSSTSTYLQSGGNTGGTDDEDDVDWSSDKRKKKSTQSSRNNGSKKNNGKTF.

Residues 115-136 (CTCPNCDRLVAAARFAPHLEKC) form an SGF11-type zinc finger. The segment at 149–211 (RRLATKEGSS…GSKKNNGKTF (63 aa)) is disordered. The segment covering 157–166 (SSASTSSTST) has biased composition (low complexity). Phosphoserine is present on Ser187. Over residues 197-211 (SSRNNGSKKNNGKTF) the composition is skewed to low complexity.

This sequence belongs to the SGF11 family. As to quaternary structure, component of some SAGA transcription coactivator-HAT complexes, at least composed of Ada2b, not/nonstop, Pcaf/Gcn5, Sgf11 and Spt3. Within the SAGA complex, Sgf11, e(y)2, and not/nonstop form an additional subcomplex of SAGA called the DUB module (deubiquitination module). Interacts directly with not/nonstop. Interacts with the AMEX complex component xmas-2. Interacts with Cbp80; important for promoter recruitment of Sgf11 that is not associated with the DUB module.

The protein resides in the nucleus. It localises to the nucleoplasm. The protein localises to the cytoplasm. Functionally, component of the transcription regulatory histone acetylation (HAT) complex SAGA, a multiprotein complex that activates transcription by remodeling chromatin and mediating histone acetylation and deubiquitination. Within the SAGA complex, participates in a subcomplex that specifically deubiquitinates histone H2B. The SAGA complex is recruited to specific gene promoters by activators, where it is required for transcription. Required for nuclear receptor-mediated transactivation. Binds independently on SAGA to promoters in an RNA-dependent manner. Binds to mRNA and is essential for total mRNA export from the nucleus. Required to counteract heterochromatin silencing. Controls the development of neuronal connectivity in visual system by being required for accurate axon targeting in the optic lobe. Required for expression of ecdysone-induced genes such as br/broad. This chain is SAGA-associated factor 11 homolog 2, found in Drosophila grimshawi (Hawaiian fruit fly).